The sequence spans 154 residues: Myoglobin (154 aa).

The 147-residue stretch at 2–148 (GLSEAEWQLV…FRKDIAAKYK (147 aa)) folds into the Globin domain. Residue S4 is modified to Phosphoserine. H65 is a binding site for nitrite. H65 provides a ligand contact to O2. T68 is modified (phosphothreonine). A heme b-binding site is contributed by H94.

It belongs to the globin family. Monomeric.

The protein localises to the cytoplasm. It localises to the sarcoplasm. The enzyme catalyses Fe(III)-heme b-[protein] + nitric oxide + H2O = Fe(II)-heme b-[protein] + nitrite + 2 H(+). The catalysed reaction is H2O2 + AH2 = A + 2 H2O. Its function is as follows. Monomeric heme protein which primary function is to store oxygen and facilitate its diffusion within muscle tissues. Reversibly binds oxygen through a pentacoordinated heme iron and enables its timely and efficient release as needed during periods of heightened demand. Depending on the oxidative conditions of tissues and cells, and in addition to its ability to bind oxygen, it also has a nitrite reductase activity whereby it regulates the production of bioactive nitric oxide. Under stress conditions, like hypoxia and anoxia, it also protects cells against reactive oxygen species thanks to its pseudoperoxidase activity. In Mesoplodon carlhubbsi (Hubb's beaked whale), this protein is Myoglobin (MB).